A 1405-amino-acid polypeptide reads, in one-letter code: DNA-directed RNA polymerase III subunit rpc1 (1405 aa).

The Zn(2+) site is built by cysteine 66, cysteine 69, cysteine 76, histidine 79, cysteine 106, cysteine 109, and cysteine 153. Residues aspartate 493, aspartate 495, and aspartate 497 each contribute to the Mg(2+) site. Residues 838 to 850 are bridging helix; sequence PTEFLFHAISGRE.

The protein belongs to the RNA polymerase beta' chain family. As to quaternary structure, component of the RNA polymerase III (Pol III) complex consisting of 17 subunits.

The protein localises to the nucleus. The catalysed reaction is RNA(n) + a ribonucleoside 5'-triphosphate = RNA(n+1) + diphosphate. In terms of biological role, DNA-dependent RNA polymerase catalyzes the transcription of DNA into RNA using the four ribonucleoside triphosphates as substrates. Largest and catalytic core component of RNA polymerase III which synthesizes small RNAs, such as 5S rRNA and tRNAs. Forms the polymerase active center together with the second largest subunit. A single-stranded DNA template strand of the promoter is positioned within the central active site cleft of Pol III. A bridging helix emanates from RPC1 and crosses the cleft near the catalytic site and is thought to promote translocation of Pol III by acting as a ratchet that moves the RNA-DNA hybrid through the active site by switching from straight to bent conformations at each step of nucleotide addition. This is DNA-directed RNA polymerase III subunit rpc1 (rpc1) from Schizosaccharomyces pombe (strain 972 / ATCC 24843) (Fission yeast).